A 311-amino-acid polypeptide reads, in one-letter code: Olfactory receptor 10D1B (311 aa).

Over 1–24 (MKNLSVVTQFILLGIPHTEGVETM) the chain is Extracellular. The chain crosses the membrane as a helical span at residues 25-45 (LFVLFFSFYIFTLVGNLLILL). Topologically, residues 46–54 (AIVSSSRLH) are cytoplasmic. A helical membrane pass occupies residues 55–75 (TPMYFFLCQLSVCDIFFPSVS). At 76-95 (SPKMLFYLSGNTPAISYAGC) the chain is on the extracellular side. Residues cysteine 95 and cysteine 187 are joined by a disulfide bond. A helical membrane pass occupies residues 96–116 (VSQLFFYHFLGGTECFLYTVM). Over 117–137 (AYDRFVAICYPLRYSVIMSHR) the chain is Cytoplasmic. Residues 138–158 (ICAFLAMGTAVFGCIHSTFLT) traverse the membrane as a helical segment. The Extracellular portion of the chain corresponds to 159-192 (TLTFQLPYCGPKDVNYYFCDIPVVMKLACADTST). The chain crosses the membrane as a helical span at residues 193–213 (LEMVGFISVGLMPLSCFFFIL). Residues 214–237 (TSYSCIVRSILQIRSTEGRHRAFS) are Cytoplasmic-facing. A helical membrane pass occupies residues 238–258 (TCSAHFTAILLFYMPVIFIYL). Over 259–271 (RPTPSPWLDATVQ) the chain is Extracellular. Residues 272-288 (ILNNLVTPMLNPLIYSL) form a helical membrane-spanning segment. Topologically, residues 289 to 311 (RNKEVKSSLWTVLHLLCFLPKHL) are cytoplasmic.

This sequence belongs to the G-protein coupled receptor 1 family.

The protein localises to the cell membrane. Functionally, odorant receptor. This is Olfactory receptor 10D1B from Mus musculus (Mouse).